We begin with the raw amino-acid sequence, 215 residues long: Adenylate kinase (215 aa).

10–15 (GCGKGT) provides a ligand contact to ATP. Residues 30–59 (STGDIFRQTIDQKGPYWEELKSYISKGLLV) are NMP. AMP contacts are provided by residues threonine 31, arginine 36, 57–59 (LLV), and glutamine 91. Positions 120–157 (GRRICSKCKRIYNIHYSAPKKEDICDDDGEFLIQRKDD) are LID. Residue arginine 121 participates in ATP binding. Zn(2+) contacts are provided by cysteine 124 and cysteine 127. 130–131 (IY) provides a ligand contact to ATP. 2 residues coordinate Zn(2+): cysteine 144 and aspartate 147. AMP-binding residues include arginine 154 and arginine 165.

It belongs to the adenylate kinase family. In terms of assembly, monomer.

The protein resides in the cytoplasm. It catalyses the reaction AMP + ATP = 2 ADP. It functions in the pathway purine metabolism; AMP biosynthesis via salvage pathway; AMP from ADP: step 1/1. Functionally, catalyzes the reversible transfer of the terminal phosphate group between ATP and AMP. Plays an important role in cellular energy homeostasis and in adenine nucleotide metabolism. This chain is Adenylate kinase, found in Malacoplasma penetrans (strain HF-2) (Mycoplasma penetrans).